We begin with the raw amino-acid sequence, 786 residues long: MSDQDHSMDEVTAVKIEKGVGGNNGGSGNGGGAAFSQTRSSSTGSSSSSGGGGGQESQPSPLALLAATCSRIESPNENSNNSQGPSQSGGTGELDLTATQLSQGANGWQIISSSSGATPTSKEQSGNSTNGSNGSESSKNRTVSGGQYVVAATPNLQNQQVLTGLPGVMPNIQYQVIPQFQTVDGQQLQFAATGAQVQQDGSGQIQIIPGANQQIITNRGSGGNIIAAMPNLLQQAVPLQGLANNVLSGQTQYVTNVPVALNGNITLLPVNSVSAATLTPSSQAGTISSSGSQESGSQPVTSGTAISSASLVSSQASSSSFFTNANSYSTTTTTSNMGIMNFTSSGSSGTSSQGQTSQRVGGLQGSDSLNIQQNQTSGGSLQGSQQKEGEQSQQTQQQQILIQPQLVQGGQALQALQAAPLSGQTFTTQAISQETLQNLQLQAVQNSGPIIIRTPTVGPNGQVSWQTLQLQNLQVQNPQAQTITLAPMQGVSLGQTSSSNTTLTPIASAASIPAGTVTVNAAQLSSMPGLQTINLSALGTSGIQVHQLPGLPLAIANTPGDHGAQLGLHGPGGDGIHDETAGGEEGENSPDPQPQAGRRTRREACTCPYCKDSEGRGSGDPGKKKQHICHIQGCGKVYGKTSHLRAHLRWHTGERPFMCNWSYCGKRFTRSDELQRHKRTHTGEKKFACPECPKRFMRSDHLSKHIKTHQNKKGGPGVALSVGTLPLDSGAGSEGSGTATPSALITTNMVAMEAICPEGIARLANSGINVMQVTELQSINISGNGF.

Residues 1–94 form a disordered region; sequence MSDQDHSMDE…PSQSGGTGEL (94 aa). At Ser2 the chain carries N-acetylserine. Ser2 and Ser7 each carry phosphoserine. The interval 2-83 is repressor domain; the sequence is SDQDHSMDEV…SPNENSNNSQ (82 aa). Lys15 is covalently cross-linked (Glycyl lysine isopeptide (Lys-Gly) (interchain with G-Cter in SUMO); alternate). Lys15 is covalently cross-linked (Glycyl lysine isopeptide (Lys-Gly) (interchain with G-Cter in SUMO2); alternate). Positions 19-33 are enriched in gly residues; it reads GVGGNNGGSGNGGGA. Low complexity predominate over residues 36–48; that stretch reads SQTRSSSTGSSSS. The residue at position 60 (Ser60) is a Phosphoserine. Low complexity predominate over residues 73-86; it reads ESPNENSNNSQGPS. At Ser102 the chain carries Phosphoserine; by ATM. Over residues 110 to 124 the composition is skewed to polar residues; the sequence is IISSSSGATPTSKEQ. The segment at 110 to 143 is disordered; the sequence is IISSSSGATPTSKEQSGNSTNGSNGSESSKNRTV. A compositionally biased stretch (low complexity) spans 125–137; the sequence is SGNSTNGSNGSES. Residues 147 to 252 are transactivation domain A (Gln-rich); that stretch reads QYVVAATPNL…ANNVLSGQTQ (106 aa). A transactivation domain B (Gln-rich) region spans residues 262–496; that stretch reads NGNITLLPVN…PMQGVSLGQT (235 aa). Residue Thr279 is modified to Phosphothreonine; by MAPK8. Disordered stretches follow at residues 281 to 303 and 332 to 397; these read SSQAGTISSSGSQESGSQPVTSG and TTTS…QTQQ. 2 stretches are compositionally biased toward low complexity: residues 343–358 and 372–397; these read TSSGSSGTSSQGQTSQ and QQNQTSGGSLQGSQQKEGEQSQQTQQ. At Thr454 the chain carries Phosphothreonine; by MAPK1 and MAPK3. Residues 463-471 carry the 9aaTAD motif; that stretch reads VSWQTLQLQ. An O-linked (GlcNAc) serine glycan is attached at Ser492. The tract at residues 497-611 is transactivation domain C (highly charged); the sequence is SSSNTTLTPI…REACTCPYCK (115 aa). The tract at residues 562–600 is disordered; sequence HGAQLGLHGPGGDGIHDETAGGEEGENSPDPQPQAGRRT. Ser613 is modified (phosphoserine; alternate). An O-linked (GlcNAc) serine; alternate glycan is attached at Ser613. Positions 620–786 are VZV IE62-binding; it reads DPGKKKQHIC…QSINISGNGF (167 aa). 3 C2H2-type zinc fingers span residues 627–656, 657–686, and 687–714; these read HICHIQGCGKVYGKTSHLRAHLRWHTGERP, FMCNWSYCGKRFTRSDELQRHKRTHTGEKK, and FACPECPKRFMRSDHLSKHIKTHQNKKG. Residue Thr641 is modified to Phosphothreonine; alternate. Thr641 is a glycosylation site (O-linked (GlcNAc) threonine; alternate). A glycan (O-linked (GlcNAc) serine; alternate) is linked at Ser642. Position 642 is a phosphoserine; by PKC/PRKCZ; alternate (Ser642). Position 652 is a phosphothreonine; by PKC/PRKCZ (Thr652). Phosphothreonine is present on Thr669. Ser671 carries the phosphoserine; by PKC/PRKCZ modification. Thr682 is subject to Phosphothreonine; by PKC/PRKCZ. Phosphoserine; alternate occurs at positions 699 and 703. O-linked (GlcNAc) serine; alternate glycosylation is found at Ser699 and Ser703. An N6-acetyllysine modification is found at Lys704. The tract at residues 709–786 is domain D; it reads HQNKKGGPGV…QSINISGNGF (78 aa). At Thr740 the chain carries Phosphothreonine; by MAPK1, MAPK3 and MAPK8.

Belongs to the Sp1 C2H2-type zinc-finger protein family. Interacts with ATF7IP, ATF7IP2, BAHD1, POGZ, HCFC1, AATF and PHC2. Interacts with SV40 VP2/3 proteins. Interacts with SV40 major capsid protein VP1; this interaction leads to a cooperativity between the 2 proteins in DNA binding. Interacts with HLTF; the interaction may be required for basal transcriptional activity of HLTF. Interacts (deacetylated form) with EP300; the interaction enhances gene expression. Interacts with HDAC1 and JUN. Interacts with ELF1; the interaction is inhibited by glycosylation of SP1. Interaction with NFYA; the interaction is inhibited by glycosylation of SP1. Interacts with SMARCA4/BRG1. Interacts with ATF7IP and TBP. Interacts with MEIS2 and PBX1. Interacts with EGR1. Interacts with RNF112 in an oxidative stress-regulated manner. Interacts with ZBTB7A; ZBTB7A prevents the binding to GC-rich motifs in promoters and represses the transcriptional activity of SP1. Interacts with DDX3X; this interaction potentiates SP1-induced CDKN1A/WAF1/CIP1 transcription. Interacts with MSX1; the interaction may inhibit MSX1 autoinactivation. Interacts with MSX3. In terms of processing, phosphorylated on multiple serine and threonine residues. Phosphorylation is coupled to ubiquitination, sumoylation and proteolytic processing. Phosphorylation on Ser-60 enhances proteolytic cleavage. Phosphorylation on Ser-7 enhances ubiquitination and protein degradation. Hyperphosphorylation on Ser-102 in response to DNA damage has no effect on transcriptional activity. MAPK1/MAPK3-mediated phosphorylation on Thr-454 and Thr-740 enhances VEGF transcription but, represses FGF2-triggered PDGFR-alpha transcription. Also implicated in the repression of RECK by ERBB2. Hyperphosphorylated on Thr-279 and Thr-740 during mitosis by MAPK8 shielding SP1 from degradation by the ubiquitin-dependent pathway. Phosphorylated in the zinc-finger domain by calmodulin-activated PKCzeta. Phosphorylation on Ser-642 by PKCzeta is critical for TSA-activated LHR gene expression through release of its repressor, p107. Phosphorylation on Thr-669, Ser-671 and Thr-682 is stimulated by angiotensin II via the AT1 receptor inducing increased binding to the PDGF-D promoter. This phosphorylation is increased in injured artey wall. Ser-60 and Thr-682 can both be dephosphorylated by PP2A during cell-cycle interphase. Dephosphorylation on Ser-60 leads to increased chromatin association during interphase and increases the transcriptional activity. On insulin stimulation, sequentially glycosylated and phosphorylated on several C-terminal serine and threonine residues. Post-translationally, acetylated. Acetylation/deacetylation events affect transcriptional activity. Deacetylation leads to an increase in the expression of the 12(s)-lipooxygenase gene through recruitment of p300 to the promoter. Deacetylated by HDAC6 which leads to increased expression of ENG and positive regulation of angiogenesis. Ubiquitinated. Ubiquitination occurs on the C-terminal proteolytically-cleaved peptide and is triggered by phosphorylation. In terms of processing, sumoylated with SUMO1. Sumoylation modulates proteolytic cleavage of the N-terminal repressor domain. Sumoylation levels are attenuated during tumorigenesis. Phosphorylation mediates SP1 desumoylation. Post-translationally, proteolytic cleavage in the N-terminal repressor domain is prevented by sumoylation. The C-terminal cleaved product is susceptible to degradation. O-glycosylated; Contains 8 N-acetylglucosamine side chains. Levels are controlled by insulin and the SP1 phosphorylation states. Insulin-mediated O-glycosylation locates SP1 to the nucleus, where it is sequentially deglycosylated and phosphorylated. O-glycosylation affects transcriptional activity through disrupting the interaction with a number of transcription factors including ELF1 and NFYA. Inhibited by peroxisomome proliferator receptor gamma (PPARgamma). As to expression, expressed in all tissues tested, including lung, kidney, spleen and thymus.

The protein localises to the nucleus. It is found in the cytoplasm. Functionally, transcription factor that can activate or repress transcription in response to physiological and pathological stimuli. Binds with high affinity to GC-rich motifs and regulates the expression of a large number of genes involved in a variety of processes such as cell growth, apoptosis, differentiation and immune responses. Highly regulated by post-translational modifications (phosphorylations, sumoylation, proteolytic cleavage, glycosylation and acetylation). Also binds the PDGFR-alpha G-box promoter. May have a role in modulating the cellular response to DNA damage. Implicated in chromatin remodeling. Plays an essential role in the regulation of FE65 gene expression. Positively regulates the transcription of the core clock component BMAL1. Plays a role in the recruitment of SMARCA4/BRG1 on the c-FOS promoter. Plays a role in protecting cells against oxidative stress following brain injury by regulating the expression of RNF112. This Rattus norvegicus (Rat) protein is Transcription factor Sp1 (Sp1).